Consider the following 450-residue polypeptide: Enolase (450 aa).

Gln-167 is a binding site for (2R)-2-phosphoglycerate. Glu-209 serves as the catalytic Proton donor. The Mg(2+) site is built by Asp-250, Glu-307, and Asp-334. (2R)-2-phosphoglycerate-binding residues include Lys-359, Arg-388, Ser-389, and Lys-410. Lys-359 acts as the Proton acceptor in catalysis.

This sequence belongs to the enolase family. Mg(2+) is required as a cofactor.

It is found in the cytoplasm. The protein localises to the secreted. It localises to the cell surface. The enzyme catalyses (2R)-2-phosphoglycerate = phosphoenolpyruvate + H2O. Its pathway is carbohydrate degradation; glycolysis; pyruvate from D-glyceraldehyde 3-phosphate: step 4/5. Functionally, catalyzes the reversible conversion of 2-phosphoglycerate (2-PG) into phosphoenolpyruvate (PEP). It is essential for the degradation of carbohydrates via glycolysis. Its function is as follows. 'Moonlights' as a plasminogen receptor and plasmin activator. Contributes to host (pig) cell adhesion; anti-enolase antibodies decrease binding to porcine kidney cells about 60%. Binds host plasminogen and fibronectin in vitro; enhances the activity of host tissue-specific plasminogen activator (tPA), and helps plasminogen and tPA degrade articifial host extracellular matrices. The protein is Enolase of Mesomycoplasma hyorhinis (strain HUB-1) (Mycoplasma hyorhinis).